Reading from the N-terminus, the 272-residue chain is sn-1 stearoyl-lipid 9-desaturase (272 aa).

Transmembrane regions (helical) follow at residues 11–31 (INWV…FAFI) and 39–59 (AVGV…TLGF). The Histidine box-1 signature appears at 60–65 (HRLVTH). Residues 97-101 (HRIHH) carry the Histidine box-2 motif. The chain crosses the membrane as a helical span at residues 160-180 (IALGLLLLYLGGWSFVVWGVF). The Histidine box-3 signature appears at 230–234 (HHAFQ).

The protein belongs to the fatty acid desaturase type 2 family. It depends on Fe(2+) as a cofactor.

It localises to the membrane. It catalyses the reaction a 1-octadecanoyl 2-acyl-glycerolipid + 2 reduced [2Fe-2S]-[ferredoxin] + O2 + 2 H(+) = a 1-[(9Z)-octadecenoyl]-2-acyl-glycerolipid + 2 oxidized [2Fe-2S]-[ferredoxin] + 2 H2O. The protein operates within lipid metabolism; polyunsaturated fatty acid biosynthesis. Desaturase involved in fatty acid biosynthesis. Introduces a double bond at carbon 9 of stearoyl groups (18:0) attached to the sn-1 position of the glycerol moiety of membrane glycerolipids. Does not desaturate palmitic acid (16:0), palmitoleic acid (16:1) and cis-vaccenic acid (18:1). This chain is sn-1 stearoyl-lipid 9-desaturase, found in Anabaena variabilis.